The following is an 869-amino-acid chain: 1-phosphatidylinositol 4,5-bisphosphate phosphodiesterase 1 (869 aa).

In terms of domain architecture, EF-hand spans Val-269–Arg-304. 4 residues coordinate Ca(2+): Asp-282, Asn-284, Asn-286, and Glu-293. Residues Tyr-382–Lys-520 enclose the PI-PLC X-box domain. Active-site residues include His-395 and His-439. Substrate is bound by residues Lys-518 and Lys-520. The segment at Ala-546 to Arg-571 is disordered. Residues Thr-558–Ser-568 show a composition bias toward low complexity. The PI-PLC Y-box domain occupies Ile-590–Leu-709. Residues Ser-614 and Arg-643 each coordinate substrate. A C2 domain is found at Val-713–Leu-862.

Interacts with SGD1. The cofactor is Ca(2+).

The enzyme catalyses a 1,2-diacyl-sn-glycero-3-phospho-(1D-myo-inositol-4,5-bisphosphate) + H2O = 1D-myo-inositol 1,4,5-trisphosphate + a 1,2-diacyl-sn-glycerol + H(+). Its function is as follows. The production of the second messenger molecules diacylglycerol (DAG) and inositol 1,4,5-trisphosphate (IP3) is mediated by activated phosphatidylinositol-specific phospholipase C enzymes. Required for cell growth, osmoresistance and expression of GPD1. The protein is 1-phosphatidylinositol 4,5-bisphosphate phosphodiesterase 1 (PLC1) of Saccharomyces cerevisiae (strain ATCC 204508 / S288c) (Baker's yeast).